A 294-amino-acid chain; its full sequence is MDHLSVKSFAKINLGLLITGKRKDGYHTLETIFAPINWYDTIGFSDSDVISMSCSNIDLPVDDNNLCIRAARALQQSASCSKGAAMNLQKVVPFGAGLGGGSSDAATVLRVLNELWKINVSSAELHELAVKLGADVPYFLEMKGLAFARGIGDELEDLGLTLPFHVVTVFPEEHISTVWAYKNFYQKFDRPVPDLRLLLQRLCLDGDRSVLGAFENDFEPAVFDHYPKVRVVKESLLDAGSFYASLSGSGSAVFGLFDTLENAAGAVCAMQQKGYRVTLTPPGFSMEAQAGSRL.

Residue Lys-11 is part of the active site. ATP is bound at residue 93-103 (PFGAGLGGGSS). Asp-135 is an active-site residue.

The protein belongs to the GHMP kinase family. IspE subfamily.

The catalysed reaction is 4-CDP-2-C-methyl-D-erythritol + ATP = 4-CDP-2-C-methyl-D-erythritol 2-phosphate + ADP + H(+). It participates in isoprenoid biosynthesis; isopentenyl diphosphate biosynthesis via DXP pathway; isopentenyl diphosphate from 1-deoxy-D-xylulose 5-phosphate: step 3/6. Catalyzes the phosphorylation of the position 2 hydroxy group of 4-diphosphocytidyl-2C-methyl-D-erythritol. In Chlorobium phaeobacteroides (strain DSM 266 / SMG 266 / 2430), this protein is 4-diphosphocytidyl-2-C-methyl-D-erythritol kinase.